A 215-amino-acid polypeptide reads, in one-letter code: Ankyrin repeat domain-containing protein 49 (215 aa).

ANK repeat units lie at residues 81-110 (DGYT…NPNA) and 114-143 (LGWT…DVNA).

As to quaternary structure, interacts with Bdbt; interaction promotes the stability of both complex members.

The protein resides in the cytoplasm. It localises to the cytosol. The protein localises to the cell membrane. Required for regulating the establishment of planar cell polarity in the wing. Forms a complex with Bdbt which likely functions in the regulation of planar polarity by promoting the activity of Dco during planar polarity establishment. Within the complex, probably functions to stabilize Bdbt, while Bdbt directly promotes Dco activity in regulating phosphorylation of core proteins such as dsh, and asymmetric localization. This is Ankyrin repeat domain-containing protein 49 from Drosophila melanogaster (Fruit fly).